The following is a 560-amino-acid chain: Membrane protein insertase YidC (560 aa).

6 helical membrane passes run 7 to 27 (NLIA…YFVV), 334 to 354 (AIDF…MNFF), 357 to 377 (YVGN…LLMF), 431 to 451 (LPIL…YVTI), 476 to 496 (LFGF…WPIL), and 522 to 542 (FMPL…LIYW).

It belongs to the OXA1/ALB3/YidC family. Type 1 subfamily. As to quaternary structure, interacts with the Sec translocase complex via SecD. Specifically interacts with transmembrane segments of nascent integral membrane proteins during membrane integration.

Its subcellular location is the cell inner membrane. Functionally, required for the insertion and/or proper folding and/or complex formation of integral membrane proteins into the membrane. Involved in integration of membrane proteins that insert both dependently and independently of the Sec translocase complex, as well as at least some lipoproteins. Aids folding of multispanning membrane proteins. This is Membrane protein insertase YidC from Rickettsia canadensis (strain McKiel).